A 154-amino-acid polypeptide reads, in one-letter code: Myoglobin (154 aa).

Residues 2–148 form the Globin domain; sequence GLSDGEWQLV…FRNDMAAQYK (147 aa). Ser-4 carries the phosphoserine modification. His-65 is a binding site for nitrite. O2 is bound at residue His-65. The residue at position 68 (Thr-68) is a Phosphothreonine. His-94 is a binding site for heme b.

The protein belongs to the globin family. Monomeric.

The protein localises to the cytoplasm. The protein resides in the sarcoplasm. The enzyme catalyses Fe(III)-heme b-[protein] + nitric oxide + H2O = Fe(II)-heme b-[protein] + nitrite + 2 H(+). It catalyses the reaction H2O2 + AH2 = A + 2 H2O. Functionally, monomeric heme protein which primary function is to store oxygen and facilitate its diffusion within muscle tissues. Reversibly binds oxygen through a pentacoordinated heme iron and enables its timely and efficient release as needed during periods of heightened demand. Depending on the oxidative conditions of tissues and cells, and in addition to its ability to bind oxygen, it also has a nitrite reductase activity whereby it regulates the production of bioactive nitric oxide. Under stress conditions, like hypoxia and anoxia, it also protects cells against reactive oxygen species thanks to its pseudoperoxidase activity. The chain is Myoglobin (MB) from Cervus elaphus (Red deer).